We begin with the raw amino-acid sequence, 171 residues long: Probable chemoreceptor glutamine deamidase CheD 1 (171 aa).

Residues 1–18 show a composition bias toward low complexity; that stretch reads MTRTTGAAPDRAAPAAGE. Residues 1-23 are disordered; that stretch reads MTRTTGAAPDRAAPAAGETPGGG.

Belongs to the CheD family.

The enzyme catalyses L-glutaminyl-[protein] + H2O = L-glutamyl-[protein] + NH4(+). Probably deamidates glutamine residues to glutamate on methyl-accepting chemotaxis receptors (MCPs), playing an important role in chemotaxis. The chain is Probable chemoreceptor glutamine deamidase CheD 1 from Anaeromyxobacter dehalogenans (strain 2CP-C).